The following is a 1187-amino-acid chain: Protein WWC2 (1187 aa).

WW domains follow at residues 10 to 43 (LPLP…DPRD) and 57 to 90 (DELP…DPRK). 2 coiled-coil regions span residues 121 to 194 (KEQR…YKQQ) and 224 to 256 (ELKS…FHLD). Phosphoserine is present on Ser-286. Residues 302–423 (LAEKVRLSLQ…EETTKLTTSL (122 aa)) adopt a coiled-coil conformation. A disordered region spans residues 438–464 (SSGSSLGSLASSRGSLNTSSRGSLNSL). In terms of domain architecture, C2 spans 697–820 (ETAQVQIGLR…FSNEIFMLWY (124 aa)). Disordered regions lie at residues 830–849 (CKKN…QPML) and 874–963 (ELAQ…ETNT). Residues 859–885 (ALLARTSAELLAVEQELAQEEEEEELR) adopt a coiled-coil conformation. Residues 875-884 (LAQEEEEEEL) are compositionally biased toward acidic residues. At Thr-999 the chain carries Phosphothreonine. Ser-1017 bears the Phosphoserine mark. Residues 1026–1045 (SLFVRNSTERRSLRVKRAVC) are interaction with PRKCZ. Residues 1063–1143 (DLELDLQASL…DLNAERLMRQ (81 aa)) adopt a coiled-coil conformation.

It belongs to the WWC family. As to quaternary structure, forms homodimers and heterodimers with WWC1 and WWC3. Interacts with DLC1 and PRKCZ. Interacts (via WW domains) with LATS1 and LATS2.

It is found in the cytoplasm. The protein localises to the cytosol. Its function is as follows. Regulator of the Hippo signaling pathway, also known as the Salvador-Warts-Hippo (SWH) pathway. Enhances phosphorylation of LATS1 and YAP1 and negatively regulates cell proliferation and organ growth due to a suppression of the transcriptional activity of YAP1, the major effector of the Hippo pathway. In Mus musculus (Mouse), this protein is Protein WWC2 (Wwc2).